A 325-amino-acid polypeptide reads, in one-letter code: ATP phosphoribosyltransferase (325 aa).

It belongs to the ATP phosphoribosyltransferase family. Long subfamily. The cofactor is Mg(2+).

The protein localises to the cytoplasm. The catalysed reaction is 1-(5-phospho-beta-D-ribosyl)-ATP + diphosphate = 5-phospho-alpha-D-ribose 1-diphosphate + ATP. Its pathway is amino-acid biosynthesis; L-histidine biosynthesis; L-histidine from 5-phospho-alpha-D-ribose 1-diphosphate: step 1/9. Its activity is regulated as follows. Feedback inhibited by histidine. Functionally, catalyzes the condensation of ATP and 5-phosphoribose 1-diphosphate to form N'-(5'-phosphoribosyl)-ATP (PR-ATP). Has a crucial role in the pathway because the rate of histidine biosynthesis seems to be controlled primarily by regulation of HisG enzymatic activity. This Rhodopseudomonas palustris (strain HaA2) protein is ATP phosphoribosyltransferase.